The chain runs to 741 residues: Aspartyl/asparaginyl beta-hydroxylase (741 aa).

The disordered stretch occupies residues Met-1 to Arg-54. At Met-1–Ser-62 the chain is on the cytoplasmic side. Residues Lys-8–Ser-25 are compositionally biased toward gly residues. Ser-15 is subject to Phosphoserine. Residues Gly-26–Gly-40 show a composition bias toward low complexity. A helical; Signal-anchor for type II membrane protein transmembrane segment spans residues Phe-63 to Trp-83. Residues Phe-84–Ile-741 are Lumenal-facing. 5 residues coordinate Ca(2+): Asp-100, Asp-102, Asp-104, Asp-106, and Asp-111. 2 disordered regions span residues Glu-120–Glu-141 and Thr-222–Ser-244. The segment covering Met-231–Asp-242 has biased composition (acidic residues). TPR repeat units lie at residues Ile-324 to Ser-357, Ala-365 to Pro-398, Thr-437 to Asp-470, Phe-472 to Gly-504, and Gly-508 to Ala-540. The N-linked (GlcNAc...) asparagine glycan is linked to Asn-453. Trp-608 is a binding site for 2-oxoglutarate. A disulfide bridge connects residues Cys-624 and Cys-631. Ser-651 contributes to the 2-oxoglutarate binding site. His-662 provides a ligand contact to Fe cation. Residue Arg-671 to His-673 participates in 2-oxoglutarate binding. An N-linked (GlcNAc...) asparagine glycan is attached at Asn-689. His-708 contacts Fe cation. Residue Arg-718 participates in 2-oxoglutarate binding.

The protein belongs to the aspartyl/asparaginyl beta-hydroxylase family. As to quaternary structure, monomer. Isoform 2 interacts with CASQ2. Fe cation is required as a cofactor. Isoform 1 is detected in heart, liver and ovary (at protein level). Detected in heart ventricle. Isoform 1 is widely expressed. Isoform 2 is detected in heart and skeletal muscle.

It localises to the endoplasmic reticulum membrane. The protein resides in the sarcoplasmic reticulum membrane. The enzyme catalyses L-aspartyl-[protein] + 2-oxoglutarate + O2 = 3-hydroxy-L-aspartyl-[protein] + succinate + CO2. In terms of biological role, specifically hydroxylates an Asp or Asn residue in certain epidermal growth factor-like (EGF) domains of a number of proteins. This is Aspartyl/asparaginyl beta-hydroxylase (Asph) from Mus musculus (Mouse).